Reading from the N-terminus, the 272-residue chain is Phosphate import ATP-binding protein PstB (272 aa).

Residues 18 to 257 form the ABC transporter domain; it reads VSIQNATISY…FNDTDKIFNA (240 aa). 50-57 is an ATP binding site; the sequence is GPSGCGKS.

Belongs to the ABC transporter superfamily. Phosphate importer (TC 3.A.1.7) family. In terms of assembly, the complex is composed of two ATP-binding proteins (PstB), two transmembrane proteins (PstC and PstA) and a solute-binding protein (PstS).

It is found in the cell inner membrane. The enzyme catalyses phosphate(out) + ATP + H2O = ADP + 2 phosphate(in) + H(+). Part of the ABC transporter complex PstSACB involved in phosphate import. Responsible for energy coupling to the transport system. This chain is Phosphate import ATP-binding protein PstB, found in Synechococcus sp. (strain CC9311).